The sequence spans 78 residues: Short neurotoxin OH-46 (78 aa).

An N-terminal signal peptide occupies residues Met1–Thr21. Cystine bridges form between Cys24/Cys40, Cys33/Cys58, Cys62/Cys70, and Cys71/Cys76.

The protein belongs to the three-finger toxin family. Short-chain subfamily. Expressed by the venom gland.

Its subcellular location is the secreted. Its function is as follows. This three-finger toxin binds and inhibits the nicotinic acetylcholine receptor (nAChR). This is Short neurotoxin OH-46 from Ophiophagus hannah (King cobra).